The primary structure comprises 117 residues: Large ribosomal subunit protein bL20 (117 aa).

It belongs to the bacterial ribosomal protein bL20 family.

In terms of biological role, binds directly to 23S ribosomal RNA and is necessary for the in vitro assembly process of the 50S ribosomal subunit. It is not involved in the protein synthesizing functions of that subunit. In Maridesulfovibrio salexigens (strain ATCC 14822 / DSM 2638 / NCIMB 8403 / VKM B-1763) (Desulfovibrio salexigens), this protein is Large ribosomal subunit protein bL20.